The chain runs to 478 residues: Ribulose bisphosphate carboxylase large chain (478 aa).

A propeptide spanning residues 1-2 (MS) is cleaved from the precursor. The residue at position 3 (Pro-3) is an N-acetylproline. At Lys-14 the chain carries N6,N6,N6-trimethyllysine. Substrate contacts are provided by Asn-123 and Thr-173. Lys-175 functions as the Proton acceptor in the catalytic mechanism. A substrate-binding site is contributed by Lys-177. Mg(2+) contacts are provided by Lys-201, Asp-203, and Glu-204. An N6-carboxylysine modification is found at Lys-201. His-294 serves as the catalytic Proton acceptor. The substrate site is built by Arg-295, His-327, and Ser-379.

Belongs to the RuBisCO large chain family. Type I subfamily. In terms of assembly, heterohexadecamer of 8 large chains and 8 small chains; disulfide-linked. The disulfide link is formed within the large subunit homodimers. Mg(2+) serves as cofactor. In terms of processing, the disulfide bond which can form in the large chain dimeric partners within the hexadecamer appears to be associated with oxidative stress and protein turnover.

The protein resides in the plastid. It is found in the chloroplast. The catalysed reaction is 2 (2R)-3-phosphoglycerate + 2 H(+) = D-ribulose 1,5-bisphosphate + CO2 + H2O. It catalyses the reaction D-ribulose 1,5-bisphosphate + O2 = 2-phosphoglycolate + (2R)-3-phosphoglycerate + 2 H(+). In terms of biological role, ruBisCO catalyzes two reactions: the carboxylation of D-ribulose 1,5-bisphosphate, the primary event in carbon dioxide fixation, as well as the oxidative fragmentation of the pentose substrate in the photorespiration process. Both reactions occur simultaneously and in competition at the same active site. This is Ribulose bisphosphate carboxylase large chain from Neurachne munroi.